Consider the following 149-residue polypeptide: 3-dehydroquinate dehydratase (149 aa).

The active-site Proton acceptor is the Y26. Substrate-binding residues include N77, H83, and D90. H103 acts as the Proton donor in catalysis. Substrate-binding positions include 104–105 and R114; that span reads LS.

Belongs to the type-II 3-dehydroquinase family. Homododecamer.

It carries out the reaction 3-dehydroquinate = 3-dehydroshikimate + H2O. It participates in metabolic intermediate biosynthesis; chorismate biosynthesis; chorismate from D-erythrose 4-phosphate and phosphoenolpyruvate: step 3/7. In terms of biological role, catalyzes a trans-dehydration via an enolate intermediate. This is 3-dehydroquinate dehydratase from Aeromonas salmonicida (strain A449).